The chain runs to 376 residues: Zinc finger CCCH domain-containing protein C337.12 (376 aa).

The stretch at 2–25 forms a coiled coil; it reads NEQQLLENIASLAGAINQYKNEKE. The tract at residues 60-95 is disordered; that stretch reads SKSTAASPPYVIPSTSSNADDANKEPEKQSTSDYVS. Positions 80-89 are enriched in basic and acidic residues; that stretch reads DANKEPEKQS. Positions 105–140 form a coiled coil; it reads KKNILEHDLQARKANLESYRAKLEKEYKTLAENKIQ. C3H1-type zinc fingers lie at residues 202-228, 229-256, 257-283, and 284-312; these read SPSA…FVHE, PTRK…HELD, PRRI…HIHY, and SENA…HILQ. The segment at 347-376 is disordered; sequence SKTAGSINPEDSGSEIGSNSLESNLDFISV. Positions 349–369 are enriched in polar residues; sequence TAGSINPEDSGSEIGSNSLES.

The protein localises to the nucleus. The sequence is that of Zinc finger CCCH domain-containing protein C337.12 from Schizosaccharomyces pombe (strain 972 / ATCC 24843) (Fission yeast).